We begin with the raw amino-acid sequence, 519 residues long: Chaperone SurA (519 aa).

Positions M1–A31 are cleaved as a signal peptide. Low complexity-rich tracts occupy residues A31 to A45 and P197 to A207. 2 disordered regions span residues A31–S50 and N196–S221. In terms of domain architecture, PpiC 1 spans P223–D324. The disordered stretch occupies residues G328 to P361. The PpiC 2 domain maps to V364–E463.

The protein localises to the periplasm. It carries out the reaction [protein]-peptidylproline (omega=180) = [protein]-peptidylproline (omega=0). Its function is as follows. Chaperone involved in the correct folding and assembly of outer membrane proteins. Recognizes specific patterns of aromatic residues and the orientation of their side chains, which are found more frequently in integral outer membrane proteins. May act in both early periplasmic and late outer membrane-associated steps of protein maturation. The polypeptide is Chaperone SurA (Bordetella parapertussis (strain 12822 / ATCC BAA-587 / NCTC 13253)).